The sequence spans 478 residues: Amino acid oxidase imqH (478 aa).

An N-terminal signal peptide occupies residues 1–22; it reads MPAPKSIIIVGSGVFGLSTAHA. Residues Val14, Phe15, Asp38, Asn53, Ala57, Asn58, Arg63, and Ile64 each contribute to the FAD site. N-linked (GlcNAc...) asparagine glycosylation is found at Asn97 and Asn167. Residue Val208 coordinates FAD. Position 399 is an S-8alpha-FAD cysteine (Cys399). The FAD site is built by Phe432 and Lys433.

It belongs to the MSOX/MTOX family. Dimer. The cofactor is FAD.

It functions in the pathway secondary metabolite biosynthesis. In terms of biological role, nonribosomal peptide synthetase; part of the gene cluster that mediates the biosynthesis of imizoquins A to D, tripeptide-derived alkaloids that serve a protective role against oxidative stress that are essential for normal germination. ImqB is a canonical three-module NRPS that assembles the tripeptide backbone of the imizoquins via condensation of Trp, Tyr, and Leu-derived precursors. N-methylation by imqF and phenol oxidation by imqC, followed by cyclization via the FAD-dependent oxidase imqH carry out the three-step transformation of L-tyrosine into tetrahydroisoquinoline. Importantly, this sequence requires the presence of a free amine in the tyrosine moiety, indicating that isoquinoline formation occurs prior to peptide bond formation. The imidazolidin-4-one ring of imizoquins could form following additional oxidation of the methyl-derived bridgehead carbon by imqH. Lastly, O-methylation by imqG and leucine hydroxylation by imqE complete biosynthesis of the imizoquins. This is Amino acid oxidase imqH from Aspergillus flavus (strain ATCC 200026 / FGSC A1120 / IAM 13836 / NRRL 3357 / JCM 12722 / SRRC 167).